Consider the following 368-residue polypeptide: D-alanine--D-alanine ligase (368 aa).

The ATP-grasp domain maps to 151–358; sequence KKLLAAEGLP…YGTLVSTLVD (208 aa). Position 179–234 (179–234) interacts with ATP; that stretch reads RSRLHLPVFVKPARGGSSIGITRVAEWAALDDAIAHARRHDPKVIVESGIAGREVE. Mg(2+) contacts are provided by Asp313, Glu325, and Asn327.

Belongs to the D-alanine--D-alanine ligase family. Mg(2+) serves as cofactor. The cofactor is Mn(2+).

It is found in the cytoplasm. The catalysed reaction is 2 D-alanine + ATP = D-alanyl-D-alanine + ADP + phosphate + H(+). Its pathway is cell wall biogenesis; peptidoglycan biosynthesis. Functionally, cell wall formation. The sequence is that of D-alanine--D-alanine ligase from Rhodococcus opacus (strain B4).